A 403-amino-acid chain; its full sequence is Pantothenate kinase (403 aa).

Residues Ser80, Ser82, and Ser84 each carry the phosphoserine modification.

Belongs to the type II pantothenate kinase family.

The protein localises to the cytoplasm. Its subcellular location is the nucleus. The enzyme catalyses (R)-pantothenate + ATP = (R)-4'-phosphopantothenate + ADP + H(+). It participates in cofactor biosynthesis; coenzyme A biosynthesis; CoA from (R)-pantothenate: step 1/5. With respect to regulation, regulated by feedback inhibition by malonyl-CoA. Plays a role in the physiological regulation of the intracellular CoA concentration. The protein is Pantothenate kinase of Schizosaccharomyces pombe (strain 972 / ATCC 24843) (Fission yeast).